An 872-amino-acid chain; its full sequence is Serine/threonine-protein phosphatase 1 regulatory subunit 10 (872 aa).

Positions 1–348 (MGSGPIDPKE…EPAAPAEPMD (348 aa)) are interaction with TOX4. The 75-residue stretch at 73-147 (KLLNSWLTYS…SDWMAVIRSQ (75 aa)) folds into the TFIIS N-terminal domain. Disordered regions lie at residues 147–213 (QSST…STGL), 247–270 (SATAAPGDAAPPAEKKYKPLNTTP), 307–398 (KKKK…KRKT), and 534–837 (VETL…HGGD). 2 stretches are compositionally biased toward basic and acidic residues: residues 153–166 (AEKDKKKRKEEGKS) and 174–196 (PLTEVKAETRAEEAPEKKKEKPK). Lys179 participates in a covalent cross-link: Glycyl lysine isopeptide (Lys-Gly) (interchain with G-Cter in SUMO2). Residues 248–258 (ATAAPGDAAPP) show a composition bias toward low complexity. Lys262 participates in a covalent cross-link: Glycyl lysine isopeptide (Lys-Gly) (interchain with G-Cter in SUMO2). At Ser313 the chain carries Phosphoserine. Residues 325 to 336 (KTSTEPSTAKPS) show a composition bias toward low complexity. The segment at 357–433 (PAVEVPELMD…NKIKDFGEAA (77 aa)) is necessary for interaction with PPP1CA. Ser382 carries the phosphoserine modification. Positions 393–408 (GRKRKTVTWPEEGKLR) are necessary for interaction with PPP1CC. The short motif at 394–423 (RKRKTVTWPEEGKLREYFYFELDETERVNV) is the PP1-binding motif element. A Phosphothreonine; by PKA modification is found at Thr398. An interaction with WDR82 region spans residues 418–619 (TERVNVNKIK…LKQMLVPHGL (202 aa)). Residues 540–551 (GGSGGSPDGAGG) show a composition bias toward gly residues. Phosphoserine occurs at positions 545 and 591. The span at 583–595 (EILTSIMGSPNNH) shows a compositional bias: polar residues. Over residues 596-611 (PSEELLKQPDYSDKLK) the composition is skewed to basic and acidic residues. Pro residues predominate over residues 644–655 (PPGPGGPMPGPH). An Omega-N-methylarginine modification is found at Arg665. Residues 674–690 (RGGDPFWDGPGDPMRGG) are compositionally biased toward low complexity. Omega-N-methylarginine is present on residues Arg693 and Arg737. A compositionally biased stretch (gly residues) spans 724 to 762 (ARGGRSGGGPPNGRGGPGGGGMVGGGGHRPHEGPGGSMG). Residues 795–835 (PHDVPSHRGHDHRGPPPHEHRGHDGHGGGGHRGHDGGHSHG) show a composition bias toward basic and acidic residues. The C3H1-type zinc finger occupies 838 to 866 (MSNRPVCRHFMMKGNCRYENNCAFYHPGV).

In terms of assembly, component of the PNUTS-PP1 complex (also named PTW/PP1 complex), composed of PPP1R10/PNUTS, TOX4, WDR82, and PPP1CA (or PPP1CB or PPP1CC). In terms of processing, phosphorylated on Thr-398 by PKA within the region necessary for interaction with PPP1CA. In terms of tissue distribution, expressed in testis, brain and intestine (at protein level). Highly expressed in testis.

Its subcellular location is the nucleus. The protein localises to the chromosome. Functionally, substrate-recognition component of the PNUTS-PP1 protein phosphatase complex, a protein phosphatase 1 (PP1) complex that promotes RNA polymerase II transcription pause-release, allowing transcription elongation. Promoter-proximal pausing by RNA polymerase II is a transcription halt following transcription initiation but prior to elongation, which acts as a checkpoint to control that transcripts are favorably configured for transcriptional elongation. The PNUTS-PP1 complex mediates the release of RNA polymerase II from promoter-proximal region of genes by catalyzing dephosphorylation of proteins involved in transcription, such as AFF4, CDK9, MEPCE, INTS12, NCBP1, POLR2M/GDOWN1 and SUPT6H. The PNUTS-PP1 complex also regulates RNA polymerase II transcription termination by mediating dephosphorylation of SUPT5H in termination zones downstream of poly(A) sites, thereby promoting deceleration of RNA polymerase II transcription. PNUTS-PP1 complex is also involved in the response to replication stress by mediating dephosphorylation of POLR2A at 'Ser-5' of the CTD, promoting RNA polymerase II degradation. The PNUTS-PP1 complex also plays a role in the control of chromatin structure and cell cycle progression during the transition from mitosis into interphase. PNUTS-PP1 complex mediates dephosphorylation of MYC, promoting MYC stability by preventing MYC ubiquitination by the SCF(FBXW7) complex. In addition to acts as a substrate-recognition component, PPP1R10/PNUTS also acts as a nuclear targeting subunit for the PNUTS-PP1 complex. In some context, PPP1R10/PNUTS also acts as an inhibitor of protein phosphatase 1 (PP1) activity by preventing access to substrates. This is Serine/threonine-protein phosphatase 1 regulatory subunit 10 from Rattus norvegicus (Rat).